Consider the following 455-residue polypeptide: L-serine dehydratase (455 aa).

It belongs to the iron-sulfur dependent L-serine dehydratase family. [4Fe-4S] cluster is required as a cofactor.

The catalysed reaction is L-serine = pyruvate + NH4(+). The protein operates within carbohydrate biosynthesis; gluconeogenesis. This chain is L-serine dehydratase (sdaA), found in Haemophilus influenzae (strain ATCC 51907 / DSM 11121 / KW20 / Rd).